Here is a 166-residue protein sequence, read N- to C-terminus: Small ribosomal subunit protein uS5 (166 aa).

The S5 DRBM domain occupies leucine 11–valine 74.

It belongs to the universal ribosomal protein uS5 family. Part of the 30S ribosomal subunit. Contacts proteins S4 and S8.

Its function is as follows. With S4 and S12 plays an important role in translational accuracy. Located at the back of the 30S subunit body where it stabilizes the conformation of the head with respect to the body. The sequence is that of Small ribosomal subunit protein uS5 from Chromohalobacter salexigens (strain ATCC BAA-138 / DSM 3043 / CIP 106854 / NCIMB 13768 / 1H11).